The chain runs to 308 residues: Lipoyl synthase (308 aa).

[4Fe-4S] cluster contacts are provided by Cys-51, Cys-56, Cys-62, Cys-77, Cys-81, Cys-84, and Ser-290. Residues 63–279 (WSKRHATFMI…ETIAKSKGFL (217 aa)) form the Radical SAM core domain.

This sequence belongs to the radical SAM superfamily. Lipoyl synthase family. [4Fe-4S] cluster serves as cofactor.

It localises to the cytoplasm. The enzyme catalyses [[Fe-S] cluster scaffold protein carrying a second [4Fe-4S](2+) cluster] + N(6)-octanoyl-L-lysyl-[protein] + 2 oxidized [2Fe-2S]-[ferredoxin] + 2 S-adenosyl-L-methionine + 4 H(+) = [[Fe-S] cluster scaffold protein] + N(6)-[(R)-dihydrolipoyl]-L-lysyl-[protein] + 4 Fe(3+) + 2 hydrogen sulfide + 2 5'-deoxyadenosine + 2 L-methionine + 2 reduced [2Fe-2S]-[ferredoxin]. It functions in the pathway protein modification; protein lipoylation via endogenous pathway; protein N(6)-(lipoyl)lysine from octanoyl-[acyl-carrier-protein]: step 2/2. Its function is as follows. Catalyzes the radical-mediated insertion of two sulfur atoms into the C-6 and C-8 positions of the octanoyl moiety bound to the lipoyl domains of lipoate-dependent enzymes, thereby converting the octanoylated domains into lipoylated derivatives. This chain is Lipoyl synthase, found in Pelagibacter ubique (strain HTCC1062).